Reading from the N-terminus, the 1829-residue chain is Sodium channel protein type 4 subunit alpha A (1829 aa).

Over 1-124 (MARLLPPTGT…RGAIKILIHS (124 aa)) the chain is Cytoplasmic. The disordered stretch occupies residues 32 to 52 (STREELEGAEEEPQAPSSDLE). An I repeat occupies 106–421 (CISPFSIVRR…VVAMAYDEQN (316 aa)). Residues 125 to 143 (LFSMFIMITILSNCVFMTM) traverse the membrane as a helical segment. Over 144-150 (SNPPAWS) the chain is Extracellular. The chain crosses the membrane as a helical span at residues 151 to 171 (KTVEYVFTGIYTFEATVKVLS). The Cytoplasmic portion of the chain corresponds to 172–185 (RGFCIGPFTFLRDP). The helical transmembrane segment at 186 to 203 (WNWLDFMVISMAYVTEFV) threads the bilayer. The Extracellular portion of the chain corresponds to 204-209 (DLGNVS). Residue Asn207 is glycosylated (N-linked (GlcNAc...) asparagine). The chain crosses the membrane as a helical span at residues 210–226 (ALRTFRVLRALKTITVI). Residues 227 to 245 (PGLKTIVGALIQSVKKMID) are Cytoplasmic-facing. The helical transmembrane segment at 246-265 (VMILTIFALAVFALIGLQLF) threads the bilayer. The Extracellular segment spans residues 266–358 (MGNLRQKCIR…PNYGYTSYDN (93 aa)). Cys273 and Cys327 form a disulfide bridge. N-linked (GlcNAc...) asparagine glycosylation is found at Asn280, Asn293, and Asn329. The cysteines at positions 336 and 342 are disulfide-linked. An intramembrane region (pore-forming) is located at residues 359-383 (FGWAFLALFRLMTQDFWENLFQLTL). Residues 384 to 390 (RAAGKTY) are Extracellular-facing. A helical transmembrane segment spans residues 391–411 (MIFFVVVIFLGSFYLINLILA). At 412 to 582 (VVAMAYDEQN…KWVHFVVMDP (171 aa)) the chain is on the cytoplasmic side. A compositionally biased stretch (polar residues) spans 446–467 (ETGSKASLASQKTQSRGSNRTG). The interval 446 to 468 (ETGSKASLASQKTQSRGSNRTGS) is disordered. The stretch at 564–836 (CCAPWILFKK…QIAIGRITRG (273 aa)) is one II repeat. Residues 583–601 (FVDLGITICIVLNTLFMAM) traverse the membrane as a helical segment. Over 602–612 (EHYPMSPHFEH) the chain is Extracellular. The helical transmembrane segment at 613–632 (VLSVGNLVFTGIFTAEMVFK) threads the bilayer. Residues 633-646 (LIAMDPYYYFQVGW) lie on the Cytoplasmic side of the membrane. The helical transmembrane segment at 647–666 (NIFDSIIVTLSLVELGLANV) threads the bilayer. The Extracellular portion of the chain corresponds to 667 to 668 (QG). A helical membrane pass occupies residues 669–686 (LSVLRSFRLLRVFKLAKS). At 687-702 (WPTLNMLIKIIGNSVG) the chain is on the cytoplasmic side. A helical membrane pass occupies residues 703-721 (ALGNLTLVLAIIVFIFAVV). Residues 722-750 (GMQLFGKSYKDCVCKISEDCELPRWHMND) lie on the Extracellular side of the membrane. Cys735 and Cys741 form a disulfide bridge. Positions 751–771 (FFHSFLIVFRILCGEWIETMW) form an intramembrane region, pore-forming. Topologically, residues 772 to 782 (DCMEVAGASMC) are extracellular. Cys773 and Cys782 are oxidised to a cystine. Residues 783–801 (LIVFMMVMVIGNLVVLNLF) form a helical membrane-spanning segment. Residues 802 to 998 (LALLLSSFSG…TCFTIVEHDY (197 aa)) are Cytoplasmic-facing. Positions 901–957 (SDVEEDEDSESSDEEDAKATLNDGDSSVCSTVDYQPPEPEPEPEEVEEEEPEPEEPE) are disordered. A compositionally biased stretch (acidic residues) spans 902 to 916 (DVEEDEDSESSDEED). Over residues 923 to 933 (DGDSSVCSTVD) the composition is skewed to polar residues. Over residues 939-957 (PEPEPEEVEEEEPEPEEPE) the composition is skewed to acidic residues. Residues 979 to 1292 (WGKKWWNLRR…KKYYNAMKKL (314 aa)) form an III repeat. A helical membrane pass occupies residues 999-1016 (FETFIIFMILLSSGALAF). The Extracellular segment spans residues 1017-1029 (EDINIERRRVIKT). Residues 1030 to 1048 (ILEYADKVFTYIFIVEMLL) traverse the membrane as a helical segment. Residues 1049 to 1062 (KWVAYGFKTYFTNA) lie on the Cytoplasmic side of the membrane. A helical membrane pass occupies residues 1063 to 1081 (WCWLDFLIVDVSLVSLTAN). Over 1082–1089 (LMGYSELG) the chain is Extracellular. A helical transmembrane segment spans residues 1090-1108 (AIKSLRTLRALRPLRALSR). The Cytoplasmic segment spans residues 1109-1125 (FEGMRVVVNALVGAIPS). A helical membrane pass occupies residues 1126–1145 (IFNVLLVCLIFWLIFSIMGV). At 1146–1196 (NLFAGKFYHCINTTTEERIPMDVVNNKSDCMALMYTNEVRWVNVKVNYDNV) the chain is on the extracellular side. Residues Cys1155 and Cys1175 are joined by a disulfide bond. 2 N-linked (GlcNAc...) asparagine glycosylation sites follow: Asn1157 and Asn1171. An intramembrane region (pore-forming) is located at residues 1197-1218 (GLGYLSLLQIATFKGWMDIMYA). Residues 1219 to 1235 (AVDSREVDEQPSYEINL) are Extracellular-facing. The helical transmembrane segment at 1236–1257 (YMYLYFVIFIIFGSFFTLNLFI) threads the bilayer. Residues 1258-1320 (GVIIDNFNQQ…LVFDFISKQF (63 aa)) lie on the Cytoplasmic side of the membrane. The segment at 1276-1278 (IFM) is important for rapid channel inactivation. An IV repeat occupies 1301 to 1599 (IPRPSNIIQG…WEKFDVDATQ (299 aa)). Residues 1321 to 1338 (FDIFIMVLICLNMVTMMI) form a helical membrane-spanning segment. The Extracellular segment spans residues 1339-1349 (ETDDQSAEKEY). The helical transmembrane segment at 1350 to 1368 (VLYQINLVFIVVFTSECVL) threads the bilayer. The Cytoplasmic portion of the chain corresponds to 1369 to 1380 (KLFALRQYFFTI). The helical transmembrane segment at 1381–1398 (GWNVFDFVVVILSIAGLM) threads the bilayer. Over 1399–1411 (LSDIIEKYFVSPT) the chain is Extracellular. A helical membrane pass occupies residues 1412 to 1428 (LFRVIRLARIGRVLRLI). The Cytoplasmic segment spans residues 1429 to 1447 (RGAKGIRTLLFALMMSLPA). The helical transmembrane segment at 1448 to 1465 (LFNIGLLLFLIMFIFSIF) threads the bilayer. Residues 1466–1487 (GMSNFAYVKKQAGIDDIFNFET) are Extracellular-facing. The pore-forming intramembrane region spans 1488–1510 (FGGSIICLFEITTSAGWDGLLLP). The Extracellular portion of the chain corresponds to 1511 to 1540 (ILNSGPPDCDPDFENPGTDVRGNCGNPGMG). A disulfide bridge links Cys1519 with Cys1534. Residues 1541 to 1563 (IMFFCSYIIMSFLVVVNMYIAII) form a helical membrane-spanning segment. At 1564 to 1829 (LENFNNAQEE…NATTIKESIV (266 aa)) the chain is on the cytoplasmic side. Residues 1693 to 1722 (EERAAIAVQRIYRRHLLKRAIRYACFMRRS) enclose the IQ domain. The tract at residues 1765 to 1786 (PMRPNSQPPKPSQVTQTRASVT) is disordered.

The protein belongs to the sodium channel (TC 1.A.1.10) family. Nav1.4/SCN4A subfamily. Voltage-gated sodium (Nav) channels consist of an ion-conducting alpha subunit which is functional on its own associated with regulatory beta subunits. In terms of tissue distribution, expressed in skeletal muscle, brain, spinal cord, and eye.

The protein resides in the cell membrane. It carries out the reaction Na(+)(in) = Na(+)(out). Functionally, pore-forming subunit of a voltage-gated sodium (Nav) channel that directly mediates the depolarizing phase of action potentials in excitable membranes. Navs, also called VGSCs (voltage-gated sodium channels) or VDSCs (voltage-dependent sodium channels), operate by switching between closed and open conformations depending on the voltage difference across the membrane. In the open conformation they allow Na(+) ions to selectively pass through the pore, along their electrochemical gradient. The influx of Na+ ions provokes membrane depolarization, initiating the propagation of electrical signals throughout cells and tissues. This Danio rerio (Zebrafish) protein is Sodium channel protein type 4 subunit alpha A (scn4aa).